A 154-amino-acid polypeptide reads, in one-letter code: SsrA-binding protein (154 aa).

This sequence belongs to the SmpB family.

The protein resides in the cytoplasm. Functionally, required for rescue of stalled ribosomes mediated by trans-translation. Binds to transfer-messenger RNA (tmRNA), required for stable association of tmRNA with ribosomes. tmRNA and SmpB together mimic tRNA shape, replacing the anticodon stem-loop with SmpB. tmRNA is encoded by the ssrA gene; the 2 termini fold to resemble tRNA(Ala) and it encodes a 'tag peptide', a short internal open reading frame. During trans-translation Ala-aminoacylated tmRNA acts like a tRNA, entering the A-site of stalled ribosomes, displacing the stalled mRNA. The ribosome then switches to translate the ORF on the tmRNA; the nascent peptide is terminated with the 'tag peptide' encoded by the tmRNA and targeted for degradation. The ribosome is freed to recommence translation, which seems to be the essential function of trans-translation. The polypeptide is SsrA-binding protein (Staphylococcus aureus (strain USA300)).